Reading from the N-terminus, the 451-residue chain is Bacteriochlorophyllide d C-8(2)-methyltransferase (451 aa).

A B12-binding domain is found at 1 to 118 (MDDDSNQKPL…DDVANNRLKE (118 aa)). In terms of domain architecture, Radical SAM core spans 148–377 (VDGTKSIPIY…ALHLVIKSDR (230 aa)). [4Fe-4S] cluster-binding residues include Cys162, Cys166, and Cys169.

Belongs to the radical SAM superfamily. [4Fe-4S] cluster is required as a cofactor.

Its subcellular location is the cytoplasm. The enzyme catalyses 8,12-diethyl-3-vinylbacteriochlorophyllide d + S-adenosyl-L-methionine = 12-ethyl-8-propyl-3-vinylbacteriochlorophyllide d + S-adenosyl-L-homocysteine + H(+). It carries out the reaction 12-ethyl-8-propyl-3-vinylbacteriochlorophyllide d + S-adenosyl-L-methionine = 12-ethyl-8-isobutyl-3-vinylbacteriochlorophyllide d + S-adenosyl-L-homocysteine + H(+). The protein operates within porphyrin-containing compound metabolism; bacteriochlorophyll biosynthesis (light-independent). Its function is as follows. Involved in the biosynthesis of the major light-harvesting pigment bacteriochlorophyll c (BChlc), which confers a significant competitive advantage to green sulfur bacteria living at limiting red and near-infrared light intensities. BchQ is a methyltransferase that adds two consecutive methyl groups to the ethyl carbon at the C-8(2) position of 8,12-diethyl-3-vinylbacteriochlorophyllide d to yield 12-ethyl-8-isobutyl-3-vinylbacteriochlorophyllide d. The chain is Bacteriochlorophyllide d C-8(2)-methyltransferase from Chlorobaculum tepidum (strain ATCC 49652 / DSM 12025 / NBRC 103806 / TLS) (Chlorobium tepidum).